Here is a 308-residue protein sequence, read N- to C-terminus: Protein translocase subunit SecF (308 aa).

A run of 6 helical transmembrane segments spans residues 14 to 34 (FFLL…LFGF), 134 to 154 (VYAV…RFEF), 158 to 178 (ISGI…FALL), 185 to 205 (TFVA…IVIF), 238 to 258 (SIRT…FGGI), and 267 to 287 (LIIG…PIWV).

It belongs to the SecD/SecF family. SecF subfamily. In terms of assembly, forms a complex with SecD. Part of the essential Sec protein translocation apparatus which comprises SecA, SecYEG and auxiliary proteins SecDF. Other proteins may also be involved.

It is found in the cell membrane. In terms of biological role, part of the Sec protein translocase complex. Interacts with the SecYEG preprotein conducting channel. SecDF uses the proton motive force (PMF) to complete protein translocation after the ATP-dependent function of SecA. This chain is Protein translocase subunit SecF, found in Alicyclobacillus acidocaldarius subsp. acidocaldarius (strain ATCC 27009 / DSM 446 / BCRC 14685 / JCM 5260 / KCTC 1825 / NBRC 15652 / NCIMB 11725 / NRRL B-14509 / 104-IA) (Bacillus acidocaldarius).